The chain runs to 115 residues: U3-lycotoxin-Ls1a (115 aa).

The first 20 residues, methionine 1–alanine 20, serve as a signal peptide directing secretion. A propeptide spanning residues glutamate 21–arginine 44 is cleaved from the precursor. Intrachain disulfides connect cysteine 48–cysteine 63, cysteine 55–cysteine 72, cysteine 62–cysteine 87, and cysteine 74–cysteine 85.

This sequence belongs to the neurotoxin 19 (CSTX) family. 01 subfamily. Expressed by the venom gland.

Its subcellular location is the secreted. In Lycosa singoriensis (Wolf spider), this protein is U3-lycotoxin-Ls1a.